The chain runs to 1869 residues: Chitin synthase csm1 (1869 aa).

The 778-residue stretch at 1–778 (MAQHRCVGGN…CWMEIAQLSD (778 aa)) folds into the Myosin motor domain. An ATP-binding site is contributed by 103-110 (GESGSGKT). Residues Asn-122, Asn-290, Asn-427, and Asn-558 are each glycosylated (N-linked (GlcNAc...) asparagine). Positions 579 to 653 (HPQERTTVMQ…KPSEEGASGQ (75 aa)) are disordered. Residues 583–593 (RTTVMQASVSS) are compositionally biased toward polar residues. Residues 658–682 (LDNVTKSFHAQNTNAYFVFCLKPND) form an actin-binding region. Asn-660 carries an N-linked (GlcNAc...) asparagine glycan. A run of 2 helical transmembrane segments spans residues 880 to 900 (WVFI…QHLG) and 919 to 939 (FIIW…PMLV). N-linked (GlcNAc...) asparagine glycosylation is found at Asn-1029, Asn-1054, and Asn-1120. Residues 1191–1211 (FILAVTIILCSIIAFKFFAAL) traverse the membrane as a helical segment. N-linked (GlcNAc...) asparagine glycans are attached at residues Asn-1448 and Asn-1554. 3 helical membrane-spanning segments follow: residues 1579-1599 (FIVF…AYIV), 1612-1632 (VPVL…IIFI), and 1639-1659 (MIAW…GLPL). The region spanning 1811–1866 (LPSDDALLAEIREILRTADLMTVTKKGVKQELERRFGVNLDSRRAYINSATEALLS) is the DEK-C domain.

It in the N-terminal section; belongs to the TRAFAC class myosin-kinesin ATPase superfamily. Myosin family. The protein in the C-terminal section; belongs to the chitin synthase family. Class V subfamily.

It localises to the cell membrane. Its subcellular location is the cell septum. It is found in the cell tip. It carries out the reaction [(1-&gt;4)-N-acetyl-beta-D-glucosaminyl](n) + UDP-N-acetyl-alpha-D-glucosamine = [(1-&gt;4)-N-acetyl-beta-D-glucosaminyl](n+1) + UDP + H(+). In terms of biological role, polymerizes chitin, a structural polymer of the cell wall and septum, by transferring the sugar moiety of UDP-GlcNAc to the non-reducing end of the growing chitin polymer. Involved in mycelial growth. This Pyricularia grisea (Crabgrass-specific blast fungus) protein is Chitin synthase csm1.